Reading from the N-terminus, the 213-residue chain is Ras-like protein rasX (213 aa).

GTP is bound at residue 16–23; that stretch reads GDGGVGKT. The Effector region motif lies at 38–46; sequence YDPTIEDSY. GTP contacts are provided by residues 63-67 and 122-125; these read DTAGQ and NKSD. C210 is modified (cysteine methyl ester). C210 carries S-geranylgeranyl cysteine lipidation. A propeptide spans 211-213 (removed in mature form); sequence KMM.

Belongs to the small GTPase superfamily. Ras family.

The protein localises to the cell membrane. The enzyme catalyses GTP + H2O = GDP + phosphate + H(+). Functionally, ras proteins bind GDP/GTP and possess intrinsic GTPase activity. The protein is Ras-like protein rasX (rasX) of Dictyostelium discoideum (Social amoeba).